We begin with the raw amino-acid sequence, 177 residues long: ATP-dependent protease subunit HslV (177 aa).

Residue threonine 2 is part of the active site. Residues glycine 157, cysteine 160, and threonine 163 each coordinate Na(+).

Belongs to the peptidase T1B family. HslV subfamily. As to quaternary structure, a double ring-shaped homohexamer of HslV is capped on each side by a ring-shaped HslU homohexamer. The assembly of the HslU/HslV complex is dependent on binding of ATP.

The protein resides in the cytoplasm. It carries out the reaction ATP-dependent cleavage of peptide bonds with broad specificity.. With respect to regulation, allosterically activated by HslU binding. In terms of biological role, protease subunit of a proteasome-like degradation complex believed to be a general protein degrading machinery. This is ATP-dependent protease subunit HslV from Aeromonas salmonicida (strain A449).